A 126-amino-acid chain; its full sequence is Iron-sulfur cluster insertion protein ErpA (126 aa).

A disordered region spans residues 1–21; sequence MNQPANQFNPSSSQPVDPTVL. Iron-sulfur cluster contacts are provided by Cys54, Cys118, and Cys120.

This sequence belongs to the HesB/IscA family. In terms of assembly, homodimer. Iron-sulfur cluster serves as cofactor.

Required for insertion of 4Fe-4S clusters for at least IspG. The chain is Iron-sulfur cluster insertion protein ErpA from Psychrobacter arcticus (strain DSM 17307 / VKM B-2377 / 273-4).